The following is a 200-amino-acid chain: dITP/XTP pyrophosphatase (200 aa).

A substrate-binding site is contributed by 8 to 13 (THNPNK). The Mg(2+) site is built by E41 and D71. Catalysis depends on D71, which acts as the Proton acceptor. Substrate-binding positions include T72, 153-156 (FGYD), K176, and 181-182 (HR).

This sequence belongs to the HAM1 NTPase family. In terms of assembly, homodimer. Mg(2+) serves as cofactor.

The enzyme catalyses XTP + H2O = XMP + diphosphate + H(+). It catalyses the reaction dITP + H2O = dIMP + diphosphate + H(+). The catalysed reaction is ITP + H2O = IMP + diphosphate + H(+). Pyrophosphatase that catalyzes the hydrolysis of nucleoside triphosphates to their monophosphate derivatives, with a high preference for the non-canonical purine nucleotides XTP (xanthosine triphosphate), dITP (deoxyinosine triphosphate) and ITP. Seems to function as a house-cleaning enzyme that removes non-canonical purine nucleotides from the nucleotide pool, thus preventing their incorporation into DNA/RNA and avoiding chromosomal lesions. The polypeptide is dITP/XTP pyrophosphatase (Caldanaerobacter subterraneus subsp. tengcongensis (strain DSM 15242 / JCM 11007 / NBRC 100824 / MB4) (Thermoanaerobacter tengcongensis)).